The sequence spans 572 residues: Proline--tRNA ligase (572 aa).

This sequence belongs to the class-II aminoacyl-tRNA synthetase family. ProS type 1 subfamily. Homodimer.

The protein localises to the cytoplasm. It carries out the reaction tRNA(Pro) + L-proline + ATP = L-prolyl-tRNA(Pro) + AMP + diphosphate. Its function is as follows. Catalyzes the attachment of proline to tRNA(Pro) in a two-step reaction: proline is first activated by ATP to form Pro-AMP and then transferred to the acceptor end of tRNA(Pro). As ProRS can inadvertently accommodate and process non-cognate amino acids such as alanine and cysteine, to avoid such errors it has two additional distinct editing activities against alanine. One activity is designated as 'pretransfer' editing and involves the tRNA(Pro)-independent hydrolysis of activated Ala-AMP. The other activity is designated 'posttransfer' editing and involves deacylation of mischarged Ala-tRNA(Pro). The misacylated Cys-tRNA(Pro) is not edited by ProRS. The protein is Proline--tRNA ligase of Escherichia coli O139:H28 (strain E24377A / ETEC).